A 111-amino-acid polypeptide reads, in one-letter code: Ig kappa chain V-III region MOPC 70 (111 aa).

Positions aspartate 1 to cysteine 23 are framework-1. A disulfide bridge connects residues cysteine 23 and cysteine 92. Positions arginine 24–asparagine 38 are complementarity-determining-1. The segment at tryptophan 39–tyrosine 53 is framework-2. Residues alanine 54 to serine 60 form a complementarity-determining-2 region. Residues glycine 61–cysteine 92 are framework-3. The complementarity-determining-3 stretch occupies residues glutamine 93–threonine 101. The tract at residues phenylalanine 102–lysine 111 is framework-4.

The sequence is that of Ig kappa chain V-III region MOPC 70 from Mus musculus (Mouse).